We begin with the raw amino-acid sequence, 253 residues long: Probable transcriptional regulatory protein syc0529_d (253 aa).

Belongs to the TACO1 family.

Its subcellular location is the cytoplasm. This is Probable transcriptional regulatory protein syc0529_d from Synechococcus sp. (strain ATCC 27144 / PCC 6301 / SAUG 1402/1) (Anacystis nidulans).